The sequence spans 272 residues: 4-hydroxy-tetrahydrodipicolinate reductase (272 aa).

Residues Gly-10–Met-15, Glu-36, Gly-100–Thr-102, and Ser-124–Met-127 contribute to the NAD(+) site. Residue His-157 is the Proton donor/acceptor of the active site. Position 158 (His-158) interacts with (S)-2,3,4,5-tetrahydrodipicolinate. Residue Lys-161 is the Proton donor of the active site. Gly-167 to Thr-168 serves as a coordination point for (S)-2,3,4,5-tetrahydrodipicolinate.

It belongs to the DapB family.

The protein localises to the cytoplasm. The catalysed reaction is (S)-2,3,4,5-tetrahydrodipicolinate + NAD(+) + H2O = (2S,4S)-4-hydroxy-2,3,4,5-tetrahydrodipicolinate + NADH + H(+). It catalyses the reaction (S)-2,3,4,5-tetrahydrodipicolinate + NADP(+) + H2O = (2S,4S)-4-hydroxy-2,3,4,5-tetrahydrodipicolinate + NADPH + H(+). Its pathway is amino-acid biosynthesis; L-lysine biosynthesis via DAP pathway; (S)-tetrahydrodipicolinate from L-aspartate: step 4/4. Its function is as follows. Catalyzes the conversion of 4-hydroxy-tetrahydrodipicolinate (HTPA) to tetrahydrodipicolinate. In Afipia carboxidovorans (strain ATCC 49405 / DSM 1227 / KCTC 32145 / OM5) (Oligotropha carboxidovorans), this protein is 4-hydroxy-tetrahydrodipicolinate reductase.